The sequence spans 289 residues: MSTALINSITYFLSEHPYIVGFRWSNSQSWGSTWSFLFTSISLYIAVSSSLHILLSAVRRSNRSVPLGHIPEIHSLLMSILSATIFAGILLSAAAEIRDTRWLWRRSKTATPLQWLLCFPLGTRPSGRVFFWSYVFYLTRFLHMFRTIFAVLRSRRLAVSQLFCNSVMAFTSFLWLEFSQSYQILAILSTTLVYSVVYGYRFWTGFGLPGSAFPSFVVNCQLVLVGCNLVSHAGVLTMHLFKGGCNGIGAWGLNSVLNGAILLLFLNFYVRMHSPMRRHINKMNSQRNA.

The next 7 helical transmembrane spans lie at 35–55 (SFLF…HILL), 75–95 (SLLM…SAAA), 129–149 (VFFW…RTIF), 157–176 (LAVS…FLWL), 181–203 (SYQI…YRFW), 205–225 (GFGL…LVLV), and 248–268 (IGAW…FLNF).

This sequence belongs to the ELO family.

It is found in the membrane. In terms of biological role, probable very long-chain fatty acid (VLCFA) elongase that controls VLCFA composition and functions to inhibit abscisic acid (ABA)-mediated stress responses, including regulation of stomatal aperture, maintenance of primary root growth and inhibition of germination. VLCFA pathway and products may function as signaling components acting upstream of sphingosine-1-phosphate, ceramide and the heterotrimeric G-protein complex, in lipid-mediated regulation of abiotic stress signaling. This Arabidopsis thaliana (Mouse-ear cress) protein is Fatty acid elongase 3-like (HOS3).